Consider the following 614-residue polypeptide: Glutamine--fructose-6-phosphate aminotransferase [isomerizing] (614 aa).

The active-site Nucleophile; for GATase activity is the cysteine 2. The Glutamine amidotransferase type-2 domain occupies 2–221 (CGIVGYIGKR…DGEIAVINRG (220 aa)). 2 SIS domains span residues 291 to 430 (YKEK…EKGT) and 463 to 604 (LSKT…VDQP). The active-site For Fru-6P isomerization activity is lysine 609.

In terms of assembly, homodimer.

The protein resides in the cytoplasm. It catalyses the reaction D-fructose 6-phosphate + L-glutamine = D-glucosamine 6-phosphate + L-glutamate. Catalyzes the first step in hexosamine metabolism, converting fructose-6P into glucosamine-6P using glutamine as a nitrogen source. The protein is Glutamine--fructose-6-phosphate aminotransferase [isomerizing] of Bacteroides thetaiotaomicron (strain ATCC 29148 / DSM 2079 / JCM 5827 / CCUG 10774 / NCTC 10582 / VPI-5482 / E50).